A 203-amino-acid chain; its full sequence is Small ribosomal subunit protein uS4 (203 aa).

In terms of domain architecture, S4 RNA-binding spans 93-156; the sequence is RRLDNVVYRL…LKVPAILEAV (64 aa).

This sequence belongs to the universal ribosomal protein uS4 family. As to quaternary structure, part of the 30S ribosomal subunit. Contacts protein S5. The interaction surface between S4 and S5 is involved in control of translational fidelity.

One of the primary rRNA binding proteins, it binds directly to 16S rRNA where it nucleates assembly of the body of the 30S subunit. Functionally, with S5 and S12 plays an important role in translational accuracy. This Streptococcus pneumoniae serotype 2 (strain D39 / NCTC 7466) protein is Small ribosomal subunit protein uS4.